The primary structure comprises 129 residues: uncharacterized protein (129 aa).

The tract at residues 23 to 101 (KASTSSESCQ…TAATRTTSKK (79 aa)) is disordered. Composition is skewed to basic and acidic residues over residues 31–40 (CQRRGVRDDT) and 67–80 (EGDRGPPRRPEKEP).

This is an uncharacterized protein from Ictaluridae (bullhead catfishes).